The chain runs to 205 residues: Low-density lipoprotein receptor class A domain-containing protein 1 (205 aa).

The helical transmembrane segment at 43–63 (LLLLLATVAALIALVTILGLP) threads the bilayer. An LDL-receptor class A 1 domain is found at 71–114 (ACITLTNRTGFLCHDQRSCIPASGVCDGVRTCTHGEDEDESLCR). Disulfide bonds link Cys72-Cys89, Cys83-Cys102, Cys96-Cys113, Cys141-Cys160, Cys163-Cys180, and Cys170-Cys193. The LDL-receptor class A 2; atypical domain maps to 115 to 161 (DVPQSLPHFLVAHCGDPASWIYSDQKCDGTNNCGDCSDELSPVTVCP). The region spanning 162 to 203 (PCGPGWWRCPSTFFKYCDCIPRHLCRDHVQHCSDWSDEYACP) is the LDL-receptor class A 3; atypical domain.

This sequence belongs to the LDLR family.

It localises to the membrane. The sequence is that of Low-density lipoprotein receptor class A domain-containing protein 1 (LDLRAD1) from Homo sapiens (Human).